Consider the following 139-residue polypeptide: Large ribosomal subunit protein mL42 (139 aa).

The N-terminal 32 residues, 1-32 (MAVAAVKWVMSKRTILKHLFPVQNGALYCVCH), are a transit peptide targeting the mitochondrion.

The protein belongs to the mitochondrion-specific ribosomal protein mL42 family. In terms of assembly, component of the mitochondrial ribosome large subunit (39S) which comprises a 16S rRNA and about 50 distinct proteins. Component of the mitochondrial ribosome small subunit (28S) which comprises a 12S rRNA and about 30 distinct proteins.

It is found in the mitochondrion. The sequence is that of Large ribosomal subunit protein mL42 (MRPL42) from Pongo abelii (Sumatran orangutan).